A 387-amino-acid chain; its full sequence is Early growth response protein 3 (387 aa).

Residues 241-283 (PGFGSLPQPPLTLKPIRPRKYPNRPSKTPLHERPHACPAEGCD) are disordered. The span at 269-283 (PLHERPHACPAEGCD) shows a compositional bias: basic and acidic residues. C2H2-type zinc fingers lie at residues 275-299 (HACPAEGCDRRFSRSDELTRHLRIH), 305-327 (FQCRICMRSFSRSDHLTTHIRTH), and 333-355 (FACEFCGRKFARSDERKRHAKIH). Residues 348–387 (RKRHAKIHLKQKEKKAEKGGAPSASSAPPVSLAPVVTTCA) are disordered. Over residues 350 to 360 (RHAKIHLKQKE) the composition is skewed to basic residues. Residues 368-387 (APSASSAPPVSLAPVVTTCA) are compositionally biased toward low complexity.

This sequence belongs to the EGR C2H2-type zinc-finger protein family.

The protein resides in the nucleus. Functionally, probable transcription factor involved in muscle spindle development. In Homo sapiens (Human), this protein is Early growth response protein 3 (EGR3).